Reading from the N-terminus, the 515-residue chain is Fatty acyl-CoA reductase 1 (515 aa).

The Cytoplasmic segment spans residues 1-465 (MVSIPEYYEG…ARKHLNKLRN (465 aa)). The segment at 451-507 (SGLPAARKHLNKLRNIRYGFNTILVILIWRIFIARSQMARNIWYFVVSLCYKFLSYF) is necessary and sufficient for PEX19-mediated localization into peroxisome membrane. The helical transmembrane segment at 466 to 483 (IRYGFNTILVILIWRIFI) threads the bilayer. Residues 484-515 (ARSQMARNIWYFVVSLCYKFLSYFRASSTMRY) are Peroxisomal-facing.

This sequence belongs to the fatty acyl-CoA reductase family. In terms of assembly, interacts with PEX19; PEX19 mediates the targeting of FAR1 to peroxisomes.

It is found in the peroxisome membrane. The enzyme catalyses a long-chain fatty acyl-CoA + 2 NADPH + 2 H(+) = a long-chain primary fatty alcohol + 2 NADP(+) + CoA. It catalyses the reaction hexadecanoyl-CoA + 2 NADPH + 2 H(+) = hexadecan-1-ol + 2 NADP(+) + CoA. It carries out the reaction octadecanoyl-CoA + 2 NADPH + 2 H(+) = octadecan-1-ol + 2 NADP(+) + CoA. The catalysed reaction is (9Z)-octadecenoyl-CoA + 2 NADPH + 2 H(+) = (9Z)-octadecen-1-ol + 2 NADP(+) + CoA. The enzyme catalyses (9Z,12Z)-octadecadienoyl-CoA + 2 NADPH + 2 H(+) = (9Z,12Z)-octadecadien-1-ol + 2 NADP(+) + CoA. It catalyses the reaction eicosanoyl-CoA + 2 NADPH + 2 H(+) = eicosan-1-ol + 2 NADP(+) + CoA. It carries out the reaction 16-methylheptadecanoyl-CoA + 2 NADPH + 2 H(+) = 16-methylheptadecan-1-ol + 2 NADP(+) + CoA. The catalysed reaction is 18-methylnonadecanoyl-CoA + 2 NADPH + 2 H(+) = 18-methylnonadecan-1-ol + 2 NADP(+) + CoA. Its function is as follows. Catalyzes the reduction of saturated and unsaturated C16 or C18 fatty acyl-CoA to fatty alcohols. It plays an essential role in the production of ether lipids/plasmalogens which synthesis requires fatty alcohols. In parallel, it is also required for wax monoesters production since fatty alcohols also constitute a substrate for their synthesis. This chain is Fatty acyl-CoA reductase 1, found in Pongo abelii (Sumatran orangutan).